Reading from the N-terminus, the 267-residue chain is Type II pantothenate kinase (267 aa).

An ATP-binding site is contributed by 6–13; that stretch reads DAGGTLIK. E70 (proton acceptor) is an active-site residue. ATP is bound by residues T99, 121-125, Y137, and S225; that span reads GGMIQ.

It belongs to the type II pantothenate kinase family. As to quaternary structure, homodimer.

Its subcellular location is the cytoplasm. It catalyses the reaction (R)-pantothenate + ATP = (R)-4'-phosphopantothenate + ADP + H(+). It participates in cofactor biosynthesis; coenzyme A biosynthesis; CoA from (R)-pantothenate: step 1/5. In terms of biological role, catalyzes the phosphorylation of pantothenate (Pan), the first step in CoA biosynthesis. The sequence is that of Type II pantothenate kinase from Staphylococcus aureus (strain bovine RF122 / ET3-1).